We begin with the raw amino-acid sequence, 488 residues long: 3-octaprenyl-4-hydroxybenzoate carboxy-lyase (488 aa).

Asn-172 serves as a coordination point for Mn(2+). Residues Ile-175–Arg-177, Arg-189–Leu-191, and Arg-194–Gly-195 each bind prenylated FMN. Glu-238 provides a ligand contact to Mn(2+). Asp-287 (proton donor) is an active-site residue.

The protein belongs to the UbiD family. Homohexamer. It depends on prenylated FMN as a cofactor. The cofactor is Mn(2+).

The protein resides in the cell membrane. It catalyses the reaction a 4-hydroxy-3-(all-trans-polyprenyl)benzoate + H(+) = a 2-(all-trans-polyprenyl)phenol + CO2. It participates in cofactor biosynthesis; ubiquinone biosynthesis. Its function is as follows. Catalyzes the decarboxylation of 3-octaprenyl-4-hydroxy benzoate to 2-octaprenylphenol, an intermediate step in ubiquinone biosynthesis. In Pseudomonas savastanoi pv. phaseolicola (strain 1448A / Race 6) (Pseudomonas syringae pv. phaseolicola (strain 1448A / Race 6)), this protein is 3-octaprenyl-4-hydroxybenzoate carboxy-lyase.